Here is a 578-residue protein sequence, read N- to C-terminus: Malonate--CoA ligase ACSF3, mitochondrial (578 aa).

The transit peptide at M1–G19 directs the protein to the mitochondrion. Position 205–213 (T205–K213) interacts with ATP. Residues Q394 to G413 form a disordered region. ATP is bound by residues D459, R473, and K565.

It belongs to the ATP-dependent AMP-binding enzyme family.

It is found in the mitochondrion. It catalyses the reaction tetracosanoate + ATP + CoA = tetracosanoyl-CoA + AMP + diphosphate. The catalysed reaction is malonate + ATP + CoA = malonyl-CoA + AMP + diphosphate. Its function is as follows. Catalyzes the initial reaction in intramitochondrial fatty acid synthesis, by activating malonate and methylmalonate, but not acetate, into their respective CoA thioester. May have some preference toward very-long-chain substrates. This chain is Malonate--CoA ligase ACSF3, mitochondrial, found in Xenopus laevis (African clawed frog).